The primary structure comprises 203 residues: GTP-binding protein rho4 (203 aa).

21–28 (GDGGCGKT) contributes to the GTP binding site. Positions 43–51 (YVPTVFENY) match the Effector region motif. Residue 70 to 74 (DTAGQ) coordinates GTP. Cys-200 carries the post-translational modification Cysteine methyl ester. The S-geranylgeranyl cysteine moiety is linked to residue Cys-200. Positions 201-203 (VIL) are cleaved as a propeptide — removed in mature form.

This sequence belongs to the small GTPase superfamily. Rho family.

Its subcellular location is the membrane. Functionally, required for cell separation. Involved in the regulation of the septum degradation during cytokinesis and in the organization of F-actin patches and cytoplasmic microtubules. This Schizosaccharomyces pombe (strain 972 / ATCC 24843) (Fission yeast) protein is GTP-binding protein rho4 (rho4).